We begin with the raw amino-acid sequence, 156 residues long: 3-hydroxyacyl-[acyl-carrier-protein] dehydratase FabZ (156 aa).

Residue H57 is part of the active site.

The protein belongs to the thioester dehydratase family. FabZ subfamily.

Its subcellular location is the cytoplasm. The enzyme catalyses a (3R)-hydroxyacyl-[ACP] = a (2E)-enoyl-[ACP] + H2O. Its function is as follows. Involved in unsaturated fatty acids biosynthesis. Catalyzes the dehydration of short chain beta-hydroxyacyl-ACPs and long chain saturated and unsaturated beta-hydroxyacyl-ACPs. The sequence is that of 3-hydroxyacyl-[acyl-carrier-protein] dehydratase FabZ from Anaeromyxobacter sp. (strain K).